Consider the following 167-residue polypeptide: Ubiquitin-conjugating enzyme E2 15 (167 aa).

The 161-residue stretch at 5-165 (ASEQLLRKQL…VRRLVRRSIE (161 aa)) folds into the UBC core domain. C90 serves as the catalytic Glycyl thioester intermediate.

This sequence belongs to the ubiquitin-conjugating enzyme family.

It carries out the reaction S-ubiquitinyl-[E1 ubiquitin-activating enzyme]-L-cysteine + [E2 ubiquitin-conjugating enzyme]-L-cysteine = [E1 ubiquitin-activating enzyme]-L-cysteine + S-ubiquitinyl-[E2 ubiquitin-conjugating enzyme]-L-cysteine.. It functions in the pathway protein modification; protein ubiquitination. Catalyzes the covalent attachment of ubiquitin to other proteins. Has a role in the formation of chromatin structures that influence the localization of transcriptional silencing factors. This chain is Ubiquitin-conjugating enzyme E2 15 (ubc15), found in Schizosaccharomyces pombe (strain 972 / ATCC 24843) (Fission yeast).